Consider the following 68-residue polypeptide: Large ribosomal subunit protein eL24 (68 aa).

Residues Cys7, Cys10, Cys33, and Cys37 each contribute to the Zn(2+) site. Residues 7 to 37 form a C4-type zinc finger; that stretch reads CSYCGREFEPGTGKMFVRNDGRVLFFCSSKC.

It belongs to the eukaryotic ribosomal protein eL24 family. As to quaternary structure, part of the 50S ribosomal subunit. Forms a cluster with proteins L3 and L14. Zn(2+) is required as a cofactor.

Binds to the 23S rRNA. This Thermococcus onnurineus (strain NA1) protein is Large ribosomal subunit protein eL24.